The following is a 368-amino-acid chain: Phosphotransferase IIC component GlvC (368 aa).

The Periplasmic portion of the chain corresponds to 1-11 (MLSQIQRFGGA). The PTS EIIC type-1 domain occupies 1 to 368 (MLSQIQRFGG…VGNMGGGLID (368 aa)). The helical transmembrane segment at 12–32 (MFTPVLLFPFAGIVVGLAILL) threads the bilayer. Topologically, residues 33 to 59 (QNPMFVGESLTDPNSLFAQIVHIIEEG) are cytoplasmic. The helical transmembrane segment at 60–80 (GWTVFRNMPLIFAVGLPIGLA) threads the bilayer. Residues 81-86 (KQAQGR) lie on the Periplasmic side of the membrane. Residues 87 to 107 (ACLAVMVSFLTWNYFINAMGM) traverse the membrane as a helical segment. The Cytoplasmic portion of the chain corresponds to 108-129 (TWGSYFGVDFTQDAVAGSGLTM). The chain crosses the membrane as a helical span at residues 130-150 (MAGIKTLDTSIIGAIIISGIV). Residues 151 to 173 (TALHNRLFDKKLPVFLGIFQGTS) are Periplasmic-facing. The helical transmembrane segment at 174 to 194 (YVVIIAFLVMIPCAWLTLLGW) threads the bilayer. The Cytoplasmic segment spans residues 195 to 198 (PKVQ). A helical membrane pass occupies residues 199–221 (MGIESLQAFLRSAGALGVWVYTF). The Periplasmic segment spans residues 222–224 (LER). Residues 225 to 245 (ILIPTGLHHFIYGQFIFGPAA) form a helical membrane-spanning segment. Residues 246 to 276 (VEGGIQMYWAQHLQEFSLSAEPLKSLFPEGG) lie on the Cytoplasmic side of the membrane. The chain crosses the membrane as a helical span at residues 277–297 (FALHGNSKIFGAVGISLAMYF). Topologically, residues 298-306 (TAAPENRVK) are periplasmic. A helical transmembrane segment spans residues 307–327 (VAGLLIPATLTAMLVGITEPL). Position 328 (E328) is a topological domain, cytoplasmic. A helical membrane pass occupies residues 329–349 (FTFLFISPLLFAVHAVLAASM). Residues 350–368 (STVMYLFGVVGNMGGGLID) are Periplasmic-facing.

Its subcellular location is the cell inner membrane. Functionally, the phosphoenolpyruvate-dependent sugar phosphotransferase system (PTS), a major carbohydrate active -transport system, catalyzes the phosphorylation of incoming sugar substrates concomitant with their translocation across the cell membrane. This operon may be cryptic in wild-type K12 strains. The polypeptide is Phosphotransferase IIC component GlvC (Escherichia coli (strain K12)).